A 165-amino-acid chain; its full sequence is Small ribosomal subunit protein uS5 (165 aa).

In terms of domain architecture, S5 DRBM spans 13 to 76 (LEENVVSINR…EDAKRHLIKV (64 aa)).

It belongs to the universal ribosomal protein uS5 family. Part of the 30S ribosomal subunit. Contacts proteins S4 and S8.

With S4 and S12 plays an important role in translational accuracy. Its function is as follows. Located at the back of the 30S subunit body where it stabilizes the conformation of the head with respect to the body. The polypeptide is Small ribosomal subunit protein uS5 (Oenococcus oeni (strain ATCC BAA-331 / PSU-1)).